Here is a 485-residue protein sequence, read N- to C-terminus: Amidophosphoribosyltransferase, chloroplastic (485 aa).

Residues 1-18 (KTTNTFASVNDDEKPREE) constitute a chloroplast transit peptide. C19 acts as the Nucleophile in catalysis. One can recognise a Glutamine amidotransferase type-2 domain in the interval 19-237 (CGVVGIYGDP…PGEVVVVDHT (219 aa)). C253 contributes to the [4Fe-4S] cluster binding site. Positions 300, 362, and 363 each coordinate Mg(2+). C399, C450, and C453 together coordinate [4Fe-4S] cluster.

This sequence in the C-terminal section; belongs to the purine/pyrimidine phosphoribosyltransferase family. It depends on Mg(2+) as a cofactor. The cofactor is [4Fe-4S] cluster.

The protein localises to the plastid. The protein resides in the chloroplast. The enzyme catalyses 5-phospho-beta-D-ribosylamine + L-glutamate + diphosphate = 5-phospho-alpha-D-ribose 1-diphosphate + L-glutamine + H2O. The protein operates within purine metabolism; IMP biosynthesis via de novo pathway; N(1)-(5-phospho-D-ribosyl)glycinamide from 5-phospho-alpha-D-ribose 1-diphosphate: step 1/2. The chain is Amidophosphoribosyltransferase, chloroplastic (PUR1) from Vigna aconitifolia (Moth bean).